A 145-amino-acid polypeptide reads, in one-letter code: Large ribosomal subunit protein bL9 (145 aa).

Belongs to the bacterial ribosomal protein bL9 family.

Functionally, binds to the 23S rRNA. The chain is Large ribosomal subunit protein bL9 from Mesomycoplasma hyopneumoniae (strain 232) (Mycoplasma hyopneumoniae).